The chain runs to 191 residues: Putative inactive glutathione hydrolase 4 (191 aa).

Residue Thr54 is the Nucleophile of the active site. Residues Thr72, Asn74, Glu93, Asp96, 126 to 127 (SS), and 147 to 148 (GG) contribute to the L-glutamate site.

The protein belongs to the gamma-glutamyltransferase family. As to expression, expressed at low levels in embryo, roots and leaves. In mature plants, expression is restricted to vascular tissues of roots, leaves, flowers and siliques.

The polypeptide is Putative inactive glutathione hydrolase 4 (GGT4) (Arabidopsis thaliana (Mouse-ear cress)).